The following is a 272-amino-acid chain: METYAVFGNPIAHSKSPFIHQQFAQQLNIEHPYGRVLAPINDFVNTLNAFFSAGGKGANVTVPFKEEAFARADELTERAALAGAVNTLKRLEDGRLLGDNTDGVGLLSDLERLSFIRPGLRILLIGAGGASRGVLLPLLSLDCAVTITNRTVSRAEELAKLFAHTGSIQALGMDELEGHEFDLIINATSSGISGDIPAIPSSLIHPGIYCYDMFYQKGKTPFLAWCEQRGSKPTADGLGMLVAQAAHAFLLWHGVLPDVEPVIKQLQEELSA.

Shikimate is bound by residues 14 to 16 and Thr-61; that span reads SKS. The active-site Proton acceptor is the Lys-65. Glu-77 contributes to the NADP(+) binding site. 2 residues coordinate shikimate: Asn-86 and Asp-102. Residues 126–130, 149–154, and Met-213 each bind NADP(+); these read GAGGA and NRTVSR. Shikimate is bound at residue Tyr-215. NADP(+) is bound at residue Gly-237.

It belongs to the shikimate dehydrogenase family. In terms of assembly, homodimer.

The enzyme catalyses shikimate + NADP(+) = 3-dehydroshikimate + NADPH + H(+). The protein operates within metabolic intermediate biosynthesis; chorismate biosynthesis; chorismate from D-erythrose 4-phosphate and phosphoenolpyruvate: step 4/7. In terms of biological role, involved in the biosynthesis of the chorismate, which leads to the biosynthesis of aromatic amino acids. Catalyzes the reversible NADPH linked reduction of 3-dehydroshikimate (DHSA) to yield shikimate (SA). In Escherichia coli O157:H7, this protein is Shikimate dehydrogenase (NADP(+)).